A 446-amino-acid polypeptide reads, in one-letter code: 3-phosphoshikimate 1-carboxyvinyltransferase (446 aa).

3-phosphoshikimate is bound by residues Lys-26, Ser-27, and Arg-31. Residue Lys-26 participates in phosphoenolpyruvate binding. Gly-100 and Arg-128 together coordinate phosphoenolpyruvate. Residues Ser-171, Ser-172, Gln-173, Ser-200, Glu-315, and His-344 each contribute to the 3-phosphoshikimate site. Gln-173 serves as a coordination point for phosphoenolpyruvate. Glu-315 (proton acceptor) is an active-site residue. Arg-348, Arg-389, and Lys-414 together coordinate phosphoenolpyruvate.

It belongs to the EPSP synthase family. Monomer.

Its subcellular location is the cytoplasm. The enzyme catalyses 3-phosphoshikimate + phosphoenolpyruvate = 5-O-(1-carboxyvinyl)-3-phosphoshikimate + phosphate. It functions in the pathway metabolic intermediate biosynthesis; chorismate biosynthesis; chorismate from D-erythrose 4-phosphate and phosphoenolpyruvate: step 6/7. In terms of biological role, catalyzes the transfer of the enolpyruvyl moiety of phosphoenolpyruvate (PEP) to the 5-hydroxyl of shikimate-3-phosphate (S3P) to produce enolpyruvyl shikimate-3-phosphate and inorganic phosphate. This Mycolicibacterium gilvum (strain PYR-GCK) (Mycobacterium gilvum (strain PYR-GCK)) protein is 3-phosphoshikimate 1-carboxyvinyltransferase.